A 180-amino-acid chain; its full sequence is UPF0134 protein MPN_127 (180 aa).

The protein belongs to the UPF0134 family.

In Mycoplasma pneumoniae (strain ATCC 29342 / M129 / Subtype 1) (Mycoplasmoides pneumoniae), this protein is UPF0134 protein MPN_127.